Reading from the N-terminus, the 58-residue chain is MVPVTLYVDIDLEEYIKSYGFVGPLSAKSDLKETARQVVEFELARAGFKAKVHLRKPV.

The chain is Gene 72 protein (72) from Mycobacterium phage L5 (Mycobacteriophage L5).